The chain runs to 172 residues: Transmembrane protein 91 (172 aa).

Disordered regions lie at residues 1-31 (MDSPSLRELQQPLLEGTECETPAQKPGRHEL) and 55-83 (PSVSAGLGEPRPPDVEDMSSSDSDSDWDG). Residues 1-97 (MDSPSLRELQ…SPFLPHDHLG (97 aa)) lie on the Extracellular side of the membrane. The segment covering 69–81 (VEDMSSSDSDSDW) has biased composition (acidic residues). A helical transmembrane segment spans residues 98-118 (LAVFSMLCCFWPVGIAAFCLA). The Cytoplasmic portion of the chain corresponds to 119–139 (QKTNKAWAKGDIQGAGAASRR). Residues 140 to 160 (AFLLGVLAVGLGVCTYAAALV) traverse the membrane as a helical segment. Topologically, residues 161–172 (TLAAYLASRDPP) are extracellular.

It belongs to the CD225/Dispanin family.

It is found in the membrane. In Homo sapiens (Human), this protein is Transmembrane protein 91 (TMEM91).